The following is a 581-amino-acid chain: Arginine--tRNA ligase (581 aa).

A 'HIGH' region motif is present at residues 126 to 136 (PNLAKEMHVGH).

The protein belongs to the class-I aminoacyl-tRNA synthetase family. Monomer.

The protein localises to the cytoplasm. The catalysed reaction is tRNA(Arg) + L-arginine + ATP = L-arginyl-tRNA(Arg) + AMP + diphosphate. The protein is Arginine--tRNA ligase of Shewanella sp. (strain ANA-3).